We begin with the raw amino-acid sequence, 98 residues long: NADH-ubiquinone oxidoreductase chain 4L (98 aa).

The next 3 membrane-spanning stretches (helical) occupy residues 1–21 (MVLI…GVLI), 36–56 (MMLS…MFSI), and 61–81 (LILL…LVSI).

Belongs to the complex I subunit 4L family.

Its subcellular location is the mitochondrion membrane. The catalysed reaction is a ubiquinone + NADH + 5 H(+)(in) = a ubiquinol + NAD(+) + 4 H(+)(out). Its function is as follows. Core subunit of the mitochondrial membrane respiratory chain NADH dehydrogenase (Complex I) which catalyzes electron transfer from NADH through the respiratory chain, using ubiquinone as an electron acceptor. Part of the enzyme membrane arm which is embedded in the lipid bilayer and involved in proton translocation. The protein is NADH-ubiquinone oxidoreductase chain 4L (MT-ND4L) of Didelphis virginiana (North American opossum).